Here is a 494-residue protein sequence, read N- to C-terminus: Trigger factor (494 aa).

The PPIase FKBP-type domain occupies 169–254 (GDRITMDYVG…VKDVAAPGAV (86 aa)). Residues 440-494 (LLAEDEGEAKAETKKAAPKKKAAAKSEAAEAGEGEEAAPKKKAAPKKKASEDSAE) form a disordered region.

The protein belongs to the FKBP-type PPIase family. Tig subfamily.

Its subcellular location is the cytoplasm. The enzyme catalyses [protein]-peptidylproline (omega=180) = [protein]-peptidylproline (omega=0). Functionally, involved in protein export. Acts as a chaperone by maintaining the newly synthesized protein in an open conformation. Functions as a peptidyl-prolyl cis-trans isomerase. The polypeptide is Trigger factor (Rhizobium etli (strain ATCC 51251 / DSM 11541 / JCM 21823 / NBRC 15573 / CFN 42)).